A 241-amino-acid chain; its full sequence is uncharacterized protein (241 aa).

Transmembrane regions (helical) follow at residues 7-27 (LIFLLFVIVVSYIFNGLWSVF), 37-57 (LFLLIAFHPQHLDGLIILLLI), 72-92 (IIALVGILLTIIKGVIKSGFG), 110-130 (INLVVFSILLTSVYVLGYVAF), and 138-158 (FGTLYTAFGGLALLGAGIKII).

The protein localises to the cell membrane. This is an uncharacterized protein from Methanocaldococcus jannaschii (strain ATCC 43067 / DSM 2661 / JAL-1 / JCM 10045 / NBRC 100440) (Methanococcus jannaschii).